The sequence spans 262 residues: (5R,7aS)-5-hydroxy-7a-methyl-1-oxo-2,3,5,6,7,7a-hexahydro-1H-indene-carboxyl-CoA reductase (262 aa).

7 residues coordinate NAD(+): D50, D77, V78, N104, Y170, K174, and A203. Y170 serves as the catalytic Proton acceptor.

The protein belongs to the short-chain dehydrogenases/reductases (SDR) family.

The catalysed reaction is (5R,7aS)-5-hydroxy-7a-methyl-1-oxo-2,3,5,6,7,7a-hexahydro-1H-indene-carboxyl-CoA + NAD(+) = (7aS)-7a-methyl-1,5-dioxo-2,3,5,6,7,7a-hexahydro-1H-indene-carboxyl-CoA + NADH + H(+). The protein operates within steroid metabolism; cholesterol degradation. Its activity is regulated as follows. Requires the presence of IpdC. Involved in the final steps of cholesterol and steroid degradation. Probably catalyzes the oxidation of the 5-OH group of (5R,7aS)-5-hydroxy-7a-methyl-1-oxo-2,3,5,6,7,7a-hexahydro-1H-indene-carboxyl-CoA, leading to the formation of HIEC-CoA. In Mycobacterium tuberculosis (strain ATCC 25618 / H37Rv), this protein is (5R,7aS)-5-hydroxy-7a-methyl-1-oxo-2,3,5,6,7,7a-hexahydro-1H-indene-carboxyl-CoA reductase.